The sequence spans 131 residues: Arsenate reductase (131 aa).

Active-site nucleophile residues include cysteine 10, cysteine 82, and cysteine 89. Intrachain disulfides connect cysteine 10–cysteine 82 and cysteine 82–cysteine 89.

It belongs to the low molecular weight phosphotyrosine protein phosphatase family. Thioredoxin-coupled ArsC subfamily.

The protein localises to the cytoplasm. It catalyses the reaction arsenate + [thioredoxin]-dithiol + H(+) = arsenite + [thioredoxin]-disulfide + H2O. Its function is as follows. Catalyzes the reduction of arsenate [As(V)] to arsenite [As(III)]. This is Arsenate reductase from Staphylococcus aureus (strain bovine RF122 / ET3-1).